Here is a 950-residue protein sequence, read N- to C-terminus: Kinase suppressor of Ras 2 (950 aa).

A disordered region spans residues 239–296 (PPLESGHRSLPPSPRQRHAVRTPPRTPNIVTTVTPPGTPPMRKKNKLKPPGTPPPSSR). Over residues 259–273 (RTPPRTPNIVTTVTP) the composition is skewed to low complexity. A phosphothreonine mark is found at T272 and T276. The Phorbol-ester/DAG-type zinc-finger motif lies at 412–456 (KHRFSTKYWMSQTCTVCGKGMLFGLKCKNCKLKCHNKCTKEAPPC). Zn(2+) is bound by residues H413, C425, C428, C438, C441, H446, C449, and C456. S474 bears the Phosphoserine; by MARK3 mark. Phosphothreonine is present on T497. Residues 498–556 (LPKTNKINKDHIPVPYQPDSSSNPSSTTSSTPSSPAPPLPPSATPPSPLHPSPQCTRQQ) are disordered. Residues 517-530 (SSSNPSSTTSSTPS) show a composition bias toward low complexity. Over residues 531 to 548 (SPAPPLPPSATPPSPLHP) the composition is skewed to pro residues. A Protein kinase domain is found at 666 to 931 (LEIGELIGKG…TKLMDMLEKL (266 aa)). ATP is bound at residue 672 to 680 (IGKGRFGQV). The Proton donor/acceptor role is filled by D786. 2 residues coordinate ATP: K788 and D803.

This sequence belongs to the protein kinase superfamily. TKL Ser/Thr protein kinase family. In terms of assembly, heterodimerizes (via N-terminus) with BRAF (via N-terminus) in a MAP2K1/MEK1-dependent manner. Interacts with BRAF; this increases the low intrinsic protein kinase activity of KSR2. Interacts with MAP2K1, forming a heterodimer that can dimerize to form a heterotetramer. Interacts with MAP3K8, MAPK, RAS and RAF. In terms of processing, phosphorylated on Ser-474 by MARK3. As to expression, mainly expressed in brain and kidney.

The protein resides in the cytoplasm. It is found in the membrane. The catalysed reaction is L-seryl-[protein] + ATP = O-phospho-L-seryl-[protein] + ADP + H(+). It catalyses the reaction L-threonyl-[protein] + ATP = O-phospho-L-threonyl-[protein] + ADP + H(+). With respect to regulation, kinase activity is inhibited by ASC24. Functionally, location-regulated scaffold connecting MEK to RAF. Has very low protein kinase activity and can phosphorylate MAP2K1 at several Ser and Thr residues with very low efficiency (in vitro). Acts as MAP2K1/MEK1-dependent allosteric activator of BRAF; upon binding to MAP2K1/MEK1, dimerizes with BRAF and promotes BRAF-mediated phosphorylation of MAP2K1/MEK1. Interaction with BRAF enhances KSR2-mediated phosphorylation of MAP2K1 (in vitro). Blocks MAP3K8 kinase activity and MAP3K8-mediated signaling. Acts as a negative regulator of MAP3K3-mediated activation of ERK, JNK and NF-kappa-B pathways, inhibiting MAP3K3-mediated interleukin-8 production. This chain is Kinase suppressor of Ras 2, found in Homo sapiens (Human).